Here is a 202-residue protein sequence, read N- to C-terminus: Imidazoleglycerol-phosphate dehydratase (202 aa).

The protein belongs to the imidazoleglycerol-phosphate dehydratase family.

Its subcellular location is the cytoplasm. The enzyme catalyses D-erythro-1-(imidazol-4-yl)glycerol 3-phosphate = 3-(imidazol-4-yl)-2-oxopropyl phosphate + H2O. The protein operates within amino-acid biosynthesis; L-histidine biosynthesis; L-histidine from 5-phospho-alpha-D-ribose 1-diphosphate: step 6/9. In Salinibacter ruber (strain DSM 13855 / M31), this protein is Imidazoleglycerol-phosphate dehydratase.